A 50-amino-acid chain; its full sequence is Small integral membrane protein 46 (50 aa).

Residues 15–37 traverse the membrane as a helical segment; sequence TTFQLWLQLLLWAHLAVRFLGYL.

Its subcellular location is the membrane. The sequence is that of Small integral membrane protein 46 from Homo sapiens (Human).